The primary structure comprises 393 residues: 1-deoxy-D-xylulose 5-phosphate reductoisomerase (393 aa).

NADPH contacts are provided by Thr-16, Gly-17, Ser-18, Ile-19, Ala-42, Arg-43, Asn-44, and Asn-127. Lys-128 provides a ligand contact to 1-deoxy-D-xylulose 5-phosphate. Glu-129 contributes to the NADPH binding site. Residue Asp-153 participates in Mn(2+) binding. Residues Ser-154, Glu-155, Ser-179, and His-202 each contribute to the 1-deoxy-D-xylulose 5-phosphate site. Glu-155 serves as a coordination point for Mn(2+). Gly-208 provides a ligand contact to NADPH. Ser-215, Asn-220, Lys-221, and Glu-224 together coordinate 1-deoxy-D-xylulose 5-phosphate. Glu-224 provides a ligand contact to Mn(2+).

Belongs to the DXR family. The cofactor is Mg(2+). Mn(2+) is required as a cofactor.

It catalyses the reaction 2-C-methyl-D-erythritol 4-phosphate + NADP(+) = 1-deoxy-D-xylulose 5-phosphate + NADPH + H(+). It participates in isoprenoid biosynthesis; isopentenyl diphosphate biosynthesis via DXP pathway; isopentenyl diphosphate from 1-deoxy-D-xylulose 5-phosphate: step 1/6. Catalyzes the NADPH-dependent rearrangement and reduction of 1-deoxy-D-xylulose-5-phosphate (DXP) to 2-C-methyl-D-erythritol 4-phosphate (MEP). The protein is 1-deoxy-D-xylulose 5-phosphate reductoisomerase of Jannaschia sp. (strain CCS1).